Here is a 62-residue protein sequence, read N- to C-terminus: Large ribosomal subunit protein bL33 (62 aa).

This sequence belongs to the bacterial ribosomal protein bL33 family.

In Trichodesmium erythraeum (strain IMS101), this protein is Large ribosomal subunit protein bL33.